Consider the following 119-residue polypeptide: Large ribosomal subunit protein bL20 (119 aa).

This sequence belongs to the bacterial ribosomal protein bL20 family.

Functionally, binds directly to 23S ribosomal RNA and is necessary for the in vitro assembly process of the 50S ribosomal subunit. It is not involved in the protein synthesizing functions of that subunit. The polypeptide is Large ribosomal subunit protein bL20 (Chloroflexus aggregans (strain MD-66 / DSM 9485)).